A 324-amino-acid chain; its full sequence is Polycomb complex protein BMI-1 (324 aa).

The RING-type zinc-finger motif lies at 18-57; sequence CVLCGGYFIDATTIIECLHSFCKTCIVRYLETSKYCPICD. The short motif at 81 to 95 is the Nuclear localization signal element; sequence KLVPGLFKNEMKRRR. The interaction with PHC2 stretch occupies residues 160–180; it reads RYLRCPAAMTVMHLRKFLRSK. Positions 162-226 are interaction with E4F1; the sequence is LRCPAAMTVM…GPLPLKYRVR (65 aa). Positions 232–324 are disordered; that stretch reads MKMSHQRDGL…LNGSSATSSG (93 aa). Low complexity predominate over residues 264 to 276; that stretch reads PSTSSCLPSPSTP. Residues 277-307 are compositionally biased toward polar residues; it reads VQSPHPQFPHISSTMNGTSNSPSANHQSSFA. Over residues 313–324 the composition is skewed to low complexity; the sequence is SSLNGSSATSSG.

In terms of assembly, component of a PRC1-like complex. Identified in a PRC1-like HPRC-H complex with CBX2, CBX4, CBX8, PHC1, PHC2, PHC3, RING1 and RNF2. Interacts with RNF2/RING2. Interacts with RING1. Part of a complex that contains RNF2, UB2D3 and BMI1, where RNF2 and BMI1 form a tight heterodimer, and UB2D3 interacts only with RNF2. The complex composed of RNF2, UB2D3 and BMI1 binds nucleosomes, and has activity only with nucleosomal histone H2A. Interacts with CBX7 and CBX8. Interacts with SPOP. Part of a complex consisting of BMI1, CUL3 and SPOP. Interacts with E4F1. Interacts with PHC2. Interacts with zinc finger protein ZNF277. May be part of a complex including at least ZNF277, BMI1 and RNF2/RING2. In terms of processing, may be polyubiquitinated; which does not lead to proteasomal degradation. Monoubiquitinated. In terms of tissue distribution, detected in most organs with high expression levels in thymus, heart, brain and testis.

It is found in the nucleus. Its subcellular location is the cytoplasm. In terms of biological role, component of a Polycomb group (PcG) multiprotein PRC1-like complex, a complex class required to maintain the transcriptionally repressive state of many genes, including Hox genes, throughout development. PcG PRC1 complex acts via chromatin remodeling and modification of histones; it mediates monoubiquitination of histone H2A 'Lys-119', rendering chromatin heritably changed in its expressibility. The complex composed of RNF2, UB2D3 and BMI1 binds nucleosomes, and has activity only with nucleosomal histone H2A. In the PRC1-like complex, regulates the E3 ubiquitin-protein ligase activity of RNF2/RING2. The protein is Polycomb complex protein BMI-1 (Bmi1) of Mus musculus (Mouse).